The primary structure comprises 472 residues: MNNFEAIIGIEIHLELNTKTKMFSPSKIDFNAEANTTVNQIDLGYPGTLPLLNKEAVVSGIKLAKALNMTIDRELHFDRKNYFYPDLPKGYQITQFYRPIGSNGYVEINTDLGTKKISIERIHLEEDTARQYHGEKTKLDYNRAGVPLIEIVSNPVISSADEAVAYVDMIRRIALSLNISSAKMEQGSLRADINISLRPKGYSKFGTKVEIKNINSFRAIKNAIEYEIKLQEQKILTNEPILQQTKRYDEETQSTIVMRTKTGTIDYKYFPESNIPFIKLSDEFINNVKLNELPWEKESRYKKEEIQDIYIKSLTNDIELANYFDSINYADRNKLSKLFFAEVVSLANSKNVKAYELNIKTTDLEKTIDLLDKEIISGKSFKKIVPLLVNFDGDIDQLIKEHDLVQISDENIITKWVNEIIAKNEALVTEYTERSEKVIKFVLGNIMKVWGGKVNPQKANEVLLKILNEKFK.

Belongs to the GatB/GatE family. GatB subfamily. In terms of assembly, heterotrimer of A, B and C subunits.

The catalysed reaction is L-glutamyl-tRNA(Gln) + L-glutamine + ATP + H2O = L-glutaminyl-tRNA(Gln) + L-glutamate + ADP + phosphate + H(+). It catalyses the reaction L-aspartyl-tRNA(Asn) + L-glutamine + ATP + H2O = L-asparaginyl-tRNA(Asn) + L-glutamate + ADP + phosphate + 2 H(+). Functionally, allows the formation of correctly charged Asn-tRNA(Asn) or Gln-tRNA(Gln) through the transamidation of misacylated Asp-tRNA(Asn) or Glu-tRNA(Gln) in organisms which lack either or both of asparaginyl-tRNA or glutaminyl-tRNA synthetases. The reaction takes place in the presence of glutamine and ATP through an activated phospho-Asp-tRNA(Asn) or phospho-Glu-tRNA(Gln). The polypeptide is Aspartyl/glutamyl-tRNA(Asn/Gln) amidotransferase subunit B (Mycoplasmopsis agalactiae (strain NCTC 10123 / CIP 59.7 / PG2) (Mycoplasma agalactiae)).